Here is a 136-residue protein sequence, read N- to C-terminus: ATP synthase epsilon chain, chloroplastic (136 aa).

The protein belongs to the ATPase epsilon chain family. As to quaternary structure, F-type ATPases have 2 components, CF(1) - the catalytic core - and CF(0) - the membrane proton channel. CF(1) has five subunits: alpha(3), beta(3), gamma(1), delta(1), epsilon(1). CF(0) has three main subunits: a, b and c.

The protein localises to the plastid. It localises to the chloroplast thylakoid membrane. Functionally, produces ATP from ADP in the presence of a proton gradient across the membrane. The sequence is that of ATP synthase epsilon chain, chloroplastic from Chaetosphaeridium globosum (Charophycean green alga).